A 241-amino-acid chain; its full sequence is Nicotinamide riboside kinase (241 aa).

An ATP-binding site is contributed by 21 to 29 (GCSSSGKST). Ser28 and Asp47 together coordinate Mg(2+). Asp47 acts as the Proton acceptor in catalysis. Substrate-binding positions include 47-50 (DDFY), 67-68 (WD), and Asp68. Arg163 is a binding site for ATP. Arg164 serves as a coordination point for substrate. ATP-binding positions include Arg167, 167–169 (RGG), and 213–215 (DVQ). 169–170 (GY) provides a ligand contact to substrate.

Belongs to the uridine kinase family. NRK subfamily.

The catalysed reaction is beta-nicotinamide D-riboside + ATP = beta-nicotinamide D-ribonucleotide + ADP + H(+). The enzyme catalyses beta-D-ribosylnicotinate + ATP = nicotinate beta-D-ribonucleotide + ADP + H(+). Its pathway is cofactor biosynthesis; NAD(+) biosynthesis. Functionally, catalyzes the phosphorylation of nicotinamide riboside (NR) and nicotinic acid riboside (NaR) to form nicotinamide mononucleotide (NMN) and nicotinic acid mononucleotide (NaMN). The chain is Nicotinamide riboside kinase (NRK1) from Eremothecium gossypii (strain ATCC 10895 / CBS 109.51 / FGSC 9923 / NRRL Y-1056) (Yeast).